Consider the following 71-residue polypeptide: Exodeoxyribonuclease 7 small subunit (71 aa).

This sequence belongs to the XseB family. In terms of assembly, heterooligomer composed of large and small subunits.

The protein resides in the cytoplasm. It catalyses the reaction Exonucleolytic cleavage in either 5'- to 3'- or 3'- to 5'-direction to yield nucleoside 5'-phosphates.. In terms of biological role, bidirectionally degrades single-stranded DNA into large acid-insoluble oligonucleotides, which are then degraded further into small acid-soluble oligonucleotides. This Clostridium botulinum (strain ATCC 19397 / Type A) protein is Exodeoxyribonuclease 7 small subunit.